Here is a 124-residue protein sequence, read N- to C-terminus: UPF0482 protein YPK_1977 (124 aa).

An N-terminal signal peptide occupies residues 1–32 (MMKINNLPRLIRAFLPATLLMLPLVWQTPALA). The tract at residues 47–69 (GGNNDPMSKEQARQSQQQWDETN) is disordered.

It belongs to the UPF0482 family.

This Yersinia pseudotuberculosis serotype O:3 (strain YPIII) protein is UPF0482 protein YPK_1977.